Reading from the N-terminus, the 118-residue chain is Large ribosomal subunit protein uL18 (118 aa).

Belongs to the universal ribosomal protein uL18 family. In terms of assembly, part of the 50S ribosomal subunit; part of the 5S rRNA/L5/L18/L25 subcomplex. Contacts the 5S and 23S rRNAs.

Functionally, this is one of the proteins that bind and probably mediate the attachment of the 5S RNA into the large ribosomal subunit, where it forms part of the central protuberance. In Nitratiruptor sp. (strain SB155-2), this protein is Large ribosomal subunit protein uL18.